We begin with the raw amino-acid sequence, 700 residues long: Long-chain-fatty-acid--CoA ligase 1 (700 aa).

Residues 1-21 (MVAQYTVPVGKAANEHETAPR) are disordered. A Glycyl lysine isopeptide (Lys-Gly) (interchain with G-Cter in ubiquitin) cross-link involves residue Lys-189. 269-280 (YTSGSTGEPKGV) lines the ATP pocket. Residues 531–580 (DGWFKTGDIGEWEANGHLKIIDRKKNLVKTMNGEYIALEKLESVYRSNEY) carry the FACS motif.

The protein belongs to the ATP-dependent AMP-binding enzyme family. As to quaternary structure, interacts with FAT1. Mg(2+) serves as cofactor.

It localises to the lipid droplet. The protein localises to the cell membrane. The enzyme catalyses a long-chain fatty acid + ATP + CoA = a long-chain fatty acyl-CoA + AMP + diphosphate. It catalyses the reaction (9Z)-octadecenoate + ATP + CoA = (9Z)-octadecenoyl-CoA + AMP + diphosphate. It carries out the reaction hexadecanoate + ATP + CoA = hexadecanoyl-CoA + AMP + diphosphate. The catalysed reaction is (9Z)-hexadecenoate + ATP + CoA = (9Z)-hexadecenoyl-CoA + AMP + diphosphate. The enzyme catalyses tetradecanoate + ATP + CoA = tetradecanoyl-CoA + AMP + diphosphate. It catalyses the reaction (9Z)-tetradecenoate + ATP + CoA = (9Z)-tetradecenoyl-CoA + AMP + diphosphate. It carries out the reaction (9Z,12Z)-octadecadienoate + ATP + CoA = (9Z,12Z)-octadecadienoyl-CoA + AMP + diphosphate. The catalysed reaction is dodecanoate + ATP + CoA = dodecanoyl-CoA + AMP + diphosphate. The enzyme catalyses pentadecanoate + ATP + CoA = pentadecanoyl-CoA + AMP + diphosphate. It catalyses the reaction undecanoate + ATP + CoA = undecanoyl-CoA + AMP + diphosphate. It carries out the reaction heptadecanoate + ATP + CoA = heptadecanoyl-CoA + AMP + diphosphate. The catalysed reaction is octadecanoate + ATP + CoA = octadecanoyl-CoA + AMP + diphosphate. Activates long-chain fatty acids (LCFA) by esterification of the fatty acids into metabolically active CoA-thioesters for subsequent degradation or incorporation into phospholipids. Also facilitates the transport of LCFAs into the cell, either by active transport or by decreasing the intracellular LCFA concentration. It may supplement intracellular myristoyl-CoA pools from exogenous myristate. Preferentially acts on C12:0-C16:0 fatty acids with myristic and pentadecanic acid (C15:0) having the highest activities. Also involved in long-chain base (LCB) uptake of sphingolipids. In contrast ot LCFA uptake, LCB uptake does not require ATP, suggesting that the enzyme is directly involved in active LCB uptake. Involved in the sphingolipid-to-glycerolipid metabolic pathway, converting the sphingolipid metabolite hexadecenoic acid to hexadecenoyl-CoA, which is then further converted to glycerolipids. This Saccharomyces cerevisiae (strain ATCC 204508 / S288c) (Baker's yeast) protein is Long-chain-fatty-acid--CoA ligase 1 (FAA1).